We begin with the raw amino-acid sequence, 203 residues long: E3 ubiquitin-protein ligase rnf152-A (203 aa).

The segment at cysteine 12–arginine 55 adopts an RING-type; degenerate zinc-finger fold. Residues serine 167 to leucine 187 traverse the membrane as a helical segment.

This sequence belongs to the RNF152 family.

The protein localises to the lysosome membrane. It catalyses the reaction S-ubiquitinyl-[E2 ubiquitin-conjugating enzyme]-L-cysteine + [acceptor protein]-L-lysine = [E2 ubiquitin-conjugating enzyme]-L-cysteine + N(6)-ubiquitinyl-[acceptor protein]-L-lysine.. The protein operates within protein modification; protein ubiquitination. E3 ubiquitin-protein ligase that acts as a negative regulator of mTORC1 signaling by mediating ubiquitination of RagA/RRAGA and RHEB. Catalyzes 'Lys-63'-linked polyubiquitination of RagA/RRAGA in response to amino acid starvation, thereby regulating mTORC1 signaling. Also mediates monoubiquitination of RHEB, promoting its association with the TSC-TBC complex and subsequent inhibition. Also mediates 'Lys-48'-linked polyubiquitination of target proteins and their subsequent targeting to the proteasome for degradation. This is E3 ubiquitin-protein ligase rnf152-A from Xenopus laevis (African clawed frog).